Consider the following 540-residue polypeptide: Phosphoenolpyruvate carboxykinase (ATP) (540 aa).

R65 contacts substrate. K87 carries the post-translational modification N6-acetyllysine. The substrate site is built by Y207 and K213. Residues K213, H232, and 248 to 256 each bind ATP; that span reads GLSGTGKTT. 2 residues coordinate Mn(2+): K213 and H232. Residue D269 coordinates Mn(2+). ATP contacts are provided by residues E297, R333, 449–450, and T455; that span reads RI. R333 is a binding site for substrate. At K523 the chain carries N6-acetyllysine.

The protein belongs to the phosphoenolpyruvate carboxykinase (ATP) family. In terms of assembly, monomer. The cofactor is Mn(2+).

The protein localises to the cytoplasm. It carries out the reaction oxaloacetate + ATP = phosphoenolpyruvate + ADP + CO2. Its pathway is carbohydrate biosynthesis; gluconeogenesis. Functionally, involved in the gluconeogenesis. Catalyzes the conversion of oxaloacetate (OAA) to phosphoenolpyruvate (PEP) through direct phosphoryl transfer between the nucleoside triphosphate and OAA. The sequence is that of Phosphoenolpyruvate carboxykinase (ATP) from Escherichia coli O7:K1 (strain IAI39 / ExPEC).